Consider the following 448-residue polypeptide: Acetate kinase (448 aa).

A Mg(2+)-binding site is contributed by Asn7. Residue Lys14 coordinates ATP. Arg91 contacts substrate. Asp148 functions as the Proton donor/acceptor in the catalytic mechanism. ATP contacts are provided by residues 208–212 (HIGNG) and 283–285 (DRR). A Mg(2+)-binding site is contributed by Glu388.

The protein belongs to the acetokinase family. As to quaternary structure, homodimer. Mg(2+) serves as cofactor. Requires Mn(2+) as cofactor.

The protein localises to the cytoplasm. The enzyme catalyses acetate + ATP = acetyl phosphate + ADP. It functions in the pathway metabolic intermediate biosynthesis; acetyl-CoA biosynthesis; acetyl-CoA from acetate: step 1/2. Catalyzes the formation of acetyl phosphate from acetate and ATP. Can also catalyze the reverse reaction. In Treponema pallidum (strain Nichols), this protein is Acetate kinase.